A 756-amino-acid polypeptide reads, in one-letter code: Xylosyl- and glucuronyltransferase LARGE1 (756 aa).

Residues 1-10 lie on the Cytoplasmic side of the membrane; that stretch reads MLGICRGRRK. The helical; Signal-anchor for type II membrane protein transmembrane segment at 11-31 threads the bilayer; sequence FLAASLTLLCIPAITWIYLFA. Topologically, residues 32–756 are lumenal; it reads GSFEDGKPVS…LKYLTAENNS (725 aa). 2 disordered regions span residues 43–64 and 82–108; these read SPLESQAHSPRYTASSQRERES and QLSLAQGQSPAHHRGNHSKTYSMEEGT. The span at 44 to 58 shows a compositional bias: polar residues; it reads PLESQAHSPRYTASS. Residues 53-95 are a coiled coil; sequence RYTASSQRERESLEVRVREVEEENRALRRQLSLAQGQSPAHHR. N-linked (GlcNAc...) asparagine glycans are attached at residues Asn97, Asn122, and Asn148. Residues 138–413 are xylosyltransferase activity; the sequence is IHVAIVCAGY…FLEYDGNLLR (276 aa). Asp242 and Asp244 together coordinate Mn(2+). The N-linked (GlcNAc...) asparagine glycan is linked to Asn272. Residues 414 to 756 form a glucuronyltransferase activity region; it reads RELFGCPSET…LKYLTAENNS (343 aa). Residues Asp563 and Asp565 each coordinate Mn(2+).

The protein in the C-terminal section; belongs to the glycosyltransferase 49 family. In the N-terminal section; belongs to the glycosyltransferase 8 family. In terms of assembly, interacts with DAG1 (via the N-terminal domain of alpha-DAG1); the interaction increases binding of DAG1 to laminin. Interacts with B4GAT1. It depends on Mn(2+) as a cofactor. In terms of tissue distribution, ubiquitous. Highest expression in heart, diaphragm and brain, where it is especially found in cerebral cortex, hippocampus, and trigeminal ganglion.

The protein localises to the golgi apparatus membrane. It catalyses the reaction 3-O-[beta-D-GlcA-(1-&gt;3)-beta-D-Xyl-(1-&gt;4)-Rib-ol-P-Rib-ol-P-3-beta-D-GalNAc-(1-&gt;3)-beta-D-GlcNAc-(1-&gt;4)-(O-6-P-alpha-D-Man)]-Thr-[protein] + UDP-alpha-D-xylose = 3-O-[alpha-D-Xyl-(1-&gt;3)-beta-D-GlcA-(1-&gt;4)-beta-D-Xyl-(1-&gt;4)-Rib-ol-P-Rib-ol-P-3-beta-D-GalNAc-(1-&gt;3)-beta-D-GlcNAc-(1-&gt;4)-(O-6-P-alpha-D-Man)]-Thr-[protein] + UDP + H(+). The catalysed reaction is 3-O-{(1-&gt;[3)-alpha-D-Xyl-(1-&gt;3)-beta-D-GlcA-(1-&gt;](n)-4)-beta-D-Xyl-(1-&gt;4)-Rib-ol-P-Rib-ol-P-3-beta-D-GalNAc-(1-&gt;3)-beta-D-GlcNAc-(1-&gt;4)-O-6-P-alpha-D-Man}-L-Thr-[protein] + UDP-alpha-D-glucuronate = 3-O-{beta-D-GlcA-(1-&gt;[3)-alpha-D-Xyl-(1-&gt;3)-beta-D-GlcA-(1-&gt;](n)-4)-beta-D-Xyl-(1-&gt;4)-Rib-ol-P-Rib-ol-P-3-beta-D-GalNAc-(1-&gt;3)-beta-D-GlcNAc-(1-&gt;4)-O-6-P-alpha-D-Man}-L-Thr-[protein] + UDP + H(+). The enzyme catalyses 3-O-{beta-D-GlcA-(1-&gt;[3)-alpha-D-Xyl-(1-&gt;3)-beta-D-GlcA-(1-&gt;](n)-4)-beta-D-Xyl-(1-&gt;4)-Rib-ol-P-Rib-ol-P-3-beta-D-GalNAc-(1-&gt;3)-beta-D-GlcNAc-(1-&gt;4)-O-6-P-alpha-D-Man}-L-Thr-[protein] + UDP-alpha-D-xylose = 3-O-{(1-&gt;[3)-alpha-D-Xyl-(1-&gt;3)-beta-D-GlcA-(1-&gt;](n+1)-4)-beta-D-Xyl-(1-&gt;4)-Rib-ol-P-Rib-ol-P-3-beta-D-GalNAc-(1-&gt;3)-beta-D-GlcNAc-(1-&gt;4)-O-6-P-alpha-D-Man}-L-Thr-[protein] + UDP + H(+). Its pathway is protein modification; protein glycosylation. Its function is as follows. Bifunctional glycosyltransferase with both alpha-1,3-xylosyltransferase and beta-1,3-glucuronyltransferase activities involved in the maturation of alpha-dystroglycan (DAG1) by glycosylation leading to DAG1 binding to laminin G-like domain-containing extracellular proteins with high affinity. Elongates the glucuronyl-beta-1,4-xylose-beta disaccharide primer structure initiated by B4GAT1 by adding repeating units [-3-Xylose-alpha-1,3-GlcA-beta-1-] to produce a heteropolysaccharide. Requires the phosphorylation of core M3 (O-mannosyl trisaccharide) by POMK to elongate the glucuronyl-beta-1,4-xylose-beta disaccharide primer. Plays a key role in skeletal muscle function and regeneration. The protein is Xylosyl- and glucuronyltransferase LARGE1 of Mus musculus (Mouse).